Reading from the N-terminus, the 57-residue chain is uncharacterized protein (57 aa).

The segment at 31 to 57 (HHQTSSFNPMPSEVSLHTSHNFPHTTF) is disordered. Polar residues predominate over residues 33-57 (QTSSFNPMPSEVSLHTSHNFPHTTF).

This is an uncharacterized protein from Invertebrate iridescent virus 6 (IIV-6).